A 397-amino-acid polypeptide reads, in one-letter code: Sulfate adenylyltransferase (397 aa).

This sequence belongs to the sulfate adenylyltransferase family.

It catalyses the reaction sulfate + ATP + H(+) = adenosine 5'-phosphosulfate + diphosphate. It functions in the pathway sulfur metabolism; hydrogen sulfide biosynthesis; sulfite from sulfate: step 1/3. This is Sulfate adenylyltransferase (sat) from Allochromatium vinosum (strain ATCC 17899 / DSM 180 / NBRC 103801 / NCIMB 10441 / D) (Chromatium vinosum).